The sequence spans 331 residues: Germ cell-specific gene 1-like protein (331 aa).

Residues 1–8 (MKTSRRGR) are Cytoplasmic-facing. A helical membrane pass occupies residues 9–29 (ALLAVALNLLALLFATTAFLT). Over 30–132 (THWCQGTQRV…FIDLAPASEK (103 aa)) the chain is Extracellular. A helical transmembrane segment spans residues 133–153 (GVLWLSVVSEVLYILLLVVGF). At 154 to 173 (SLMCLELFHSSNVIDGLKLN) the chain is on the cytoplasmic side. A helical membrane pass occupies residues 174-194 (AFAAVFTVLSGLLGMVAHMMY). At 195-217 (TQVFQVTVSLGPEDWRPHSWDYG) the chain is on the extracellular side. The chain crosses the membrane as a helical span at residues 218-238 (WSFCLAWGSFTCCMAASVTTL). Over 239-331 (NSYTKTVIEF…RQCWVLGHWV (93 aa)) the chain is Cytoplasmic.

Belongs to the GSG1 family. Component of the inner core of AMPAR complex. AMPAR complex consists of an inner core made of 4 pore-forming GluA/GRIA proteins (GRIA1, GRIA2, GRIA3 and GRIA4) and 4 major auxiliary subunits arranged in a twofold symmetry. One of the two pairs of distinct binding sites is occupied either by CNIH2, CNIH3 or CACNG2, CACNG3. The other harbors CACNG2, CACNG3, CACNG4, CACNG8 or GSG1L. This inner core of AMPAR complex is complemented by outer core constituents binding directly to the GluA/GRIA proteins at sites distinct from the interaction sites of the inner core constituents. Outer core constituents include at least PRRT1, PRRT2, CKAMP44/SHISA9, FRRS1L and NRN1. The proteins of the inner and outer core serve as a platform for other, more peripherally associated AMPAR constituents. Alone or in combination, these auxiliary subunits control the gating and pharmacology of the AMPAR complex and profoundly impact their biogenesis and protein processing.

Its subcellular location is the cell membrane. It is found in the synapse. Its function is as follows. As a component of the inner core of AMPAR complex, modifies AMPA receptor (AMPAR) gating. This is Germ cell-specific gene 1-like protein (GSG1L) from Homo sapiens (Human).